Consider the following 260-residue polypeptide: Lysozyme D (260 aa).

The signal sequence occupies residues 1–19 (MRLLVTLILLIFVLTVSGQ). The segment at 83 to 148 (GSTTTGGTGS…SGGSSGSGSG (66 aa)) is disordered. Gly residues-rich tracts occupy residues 101–119 (SGSG…GSGT) and 129–147 (SGSG…GSGS).

Belongs to the dictyostelium lysozyme family. Contains disulfide bonds.

Its subcellular location is the cytoplasmic vesicle lumen. It catalyses the reaction Hydrolysis of (1-&gt;4)-beta-linkages between N-acetylmuramic acid and N-acetyl-D-glucosamine residues in a peptidoglycan and between N-acetyl-D-glucosamine residues in chitodextrins.. Functionally, has antibacterial activity. The sequence is that of Lysozyme D (alyD-1) from Dictyostelium discoideum (Social amoeba).